Here is a 366-residue protein sequence, read N- to C-terminus: Beta sliding clamp (366 aa).

It belongs to the beta sliding clamp family. Forms a ring-shaped head-to-tail homodimer around DNA which binds and tethers DNA polymerases and other proteins to the DNA. The DNA replisome complex has a single clamp-loading complex (3 tau and 1 each of delta, delta', psi and chi subunits) which binds 3 Pol III cores (1 core on the leading strand and 2 on the lagging strand) each with a beta sliding clamp dimer. Additional proteins in the replisome are other copies of gamma, psi and chi, Ssb, DNA helicase and RNA primase.

It is found in the cytoplasm. In terms of biological role, confers DNA tethering and processivity to DNA polymerases and other proteins. Acts as a clamp, forming a ring around DNA (a reaction catalyzed by the clamp-loading complex) which diffuses in an ATP-independent manner freely and bidirectionally along dsDNA. Initially characterized for its ability to contact the catalytic subunit of DNA polymerase III (Pol III), a complex, multichain enzyme responsible for most of the replicative synthesis in bacteria; Pol III exhibits 3'-5' exonuclease proofreading activity. The beta chain is required for initiation of replication as well as for processivity of DNA replication. This chain is Beta sliding clamp (dnaN), found in Haemophilus influenzae (strain ATCC 51907 / DSM 11121 / KW20 / Rd).